The chain runs to 343 residues: Ribosomal RNA small subunit methyltransferase C (343 aa).

This sequence belongs to the methyltransferase superfamily. RsmC family. In terms of assembly, monomer.

Its subcellular location is the cytoplasm. The catalysed reaction is guanosine(1207) in 16S rRNA + S-adenosyl-L-methionine = N(2)-methylguanosine(1207) in 16S rRNA + S-adenosyl-L-homocysteine + H(+). In terms of biological role, specifically methylates the guanine in position 1207 of 16S rRNA in the 30S particle. The chain is Ribosomal RNA small subunit methyltransferase C from Escherichia coli (strain SMS-3-5 / SECEC).